A 169-amino-acid polypeptide reads, in one-letter code: uncharacterized protein (169 aa).

This is an uncharacterized protein from Buchnera aphidicola subsp. Acyrthosiphon pisum (strain APS) (Acyrthosiphon pisum symbiotic bacterium).